The chain runs to 589 residues: Zinc finger protein 703 (589 aa).

Positions Ser-102–Pro-315 are disordered. Positions Ser-113–Ser-122 are enriched in low complexity. Positions Ser-137–Ser-148 are enriched in basic and acidic residues. Residues Asn-179–Thr-188 show a composition bias toward polar residues. Residues Ser-196 to Ser-206 show a composition bias toward low complexity. The span at Gln-214 to His-230 shows a compositional bias: polar residues. The span at Gly-237–Asp-250 shows a compositional bias: low complexity. Residues Arg-251–Ser-262 show a composition bias toward basic and acidic residues. The segment covering Ser-272 to Gln-299 has biased composition (low complexity). Residues Val-408–Leu-460 form a required for interaction with Groucho and hdac2 plays an important role in repression of transcription region. A C2H2-type zinc finger spans residues His-462–His-490. A required for self-association and nuclear localization region spans residues Gly-498 to Gln-589.

This sequence belongs to the Elbow/Noc family. In terms of assembly, self-associates. Interacts with nlz2. May interact with Groucho corepressor proteins.

The protein localises to the nucleus. The protein resides in the cytoplasm. In terms of biological role, transcriptional corepressor which does not bind directly to DNA and may regulate transcription through recruitment of histone deacetylases to gene promoters. Required for segmental gene expression during hindbrain development. May regulate cell adhesion, migration and proliferation. The sequence is that of Zinc finger protein 703 (znf703) from Danio rerio (Zebrafish).